Consider the following 1721-residue polypeptide: Intersectin-1 (1721 aa).

The EH 1 domain maps to 21–109 (ERAKHDQQFH…PVMKQQPVAI (89 aa)). Residues 53 to 88 (LPQPVLAQIWALADMNNDGRMDQVEFSIAMKLIKLK) enclose the EF-hand 1 domain. Ca(2+) is bound by residues D66, N68, D70, R72, and E77. S203 carries the post-translational modification Phosphoserine. Positions 221-310 (SRLKYRQLFN…PEYIPPSFRR (90 aa)) constitute an EH 2 domain. In terms of domain architecture, EF-hand 2 spans 254–289 (LPQAQLASIWNLSDIDQDGKLTAEEFILAMHLIDVA). Ca(2+) is bound by residues D267, D269, D271, K273, and E278. Position 318 is a phosphoserine (S318). 2 disordered regions span residues 322-348 (STSV…KLPV) and 650-701 (QRRA…KQEA). Positions 326 to 702 (DQRLPEEPVL…GEEKGKQEAQ (377 aa)) are KLERQ. Residues 355 to 659 (RENFERGNLE…QRRAQERDKQ (305 aa)) are a coiled coil. The residue at position 687 (S687) is a Phosphoserine. The SH3 1 domain occupies 740–806 (VKVVYYRALY…PANYAEKIPE (67 aa)). The segment at 836–868 (LAVTSSEPSTTPNNWADFSSTWPTSTNEKPETD) is disordered. Over residues 838-862 (VTSSEPSTTPNNWADFSSTWPTSTN) the composition is skewed to polar residues. T897 is modified (phosphothreonine). A phosphoserine mark is found at S901, S902, and S904. The SH3 2 domain occupies 913-971 (VEGLQAQALYPWRAKKDNHLNFNKNDVITVLEQQDMWWFGEVQGQKGWFPKSYVKLISG). S978, S986, and S995 each carry phosphoserine. SH3 domains lie at 1002 to 1060 (VSGE…LKDS) and 1074 to 1138 (KKPE…LLSP). A required for interaction with FCHSD2 region spans residues 1074–1138 (KKPEIAQVIA…PANYVKLLSP (65 aa)). The Bipartite nuclear localization signal; in isoform 2 motif lies at 1104–1127 (RKKNPGGWWEGELQARGKKRQIGW). The residue at position 1137 (S1137) is a Phosphoserine. T1144 carries the post-translational modification Phosphothreonine. An SH3 5 domain is found at 1155–1214 (AAVCQVIGMYDYTAQNDDELAFNKGQIINVLNKEDPDWWKGEVNGQVGLFPSNYVKLTTD). A DH domain is found at 1237–1423 (KRQGYIHELI…EELCSQVNEG (187 aa)). A PH domain is found at 1462–1571 (KFLHSGKLYK…WVQKIKAASE (110 aa)). The C2 domain maps to 1579-1695 (KKREKAYLVR…KKDQGSKGPV (117 aa)). S1645 is modified (phosphoserine). D1667, S1670, and D1673 together coordinate Ca(2+).

In terms of assembly, interacts (via DH domain) with CDC42. Interacts (via SH3 domain 1) with WASL. Interacts with dynamin, SNAP25 and SNAP23. Interacts with clathrin-associated proteins and other components of the endocytic machinery, such as SPIN90, EPS15, EPN1, EPN2, STON2, FCHO1, FCHO2 and DAB2. Interacts (via SH3 domains) with REPS1 and SGIP1. Interacts with ARHGAP31. Interacts with ADAM15. Interacts with PRRT2. Interacts (via SH3 domain 4) with FCHSD2 (via SH3 domain 2). Interacts (via SH3 domain 1) with DENND2B. Interacts (via SH3 domains) with CBL. Isoform 2: Interacts with CBL and DNM1. Isoform 2: Interacts with LMNA. Isoform 2: Interacts with importin subunit KPNA1; this is likely to mediate its import into the nucleus. Interacts with DNM2. (Microbial infection) Interacts with vaccinia virus protein A36. Ca(2+) is required as a cofactor. Isoform 1 is expressed almost exclusively in the brain. Isoform 2 is detected in brain, spleen, lung, liver, heart, skeletal muscle and kidney. Isoform 5 is primarily expressed in brain, spleen, lung and kidney (at protein level). Isoform 1 and isoform 2 are detected in brain. Isoform 2 is ubiquitous in adult and fetal tissues with high expression in skeletal muscle, heart, spleen, ovary, testis and all fetal tissues tested and low expression in thymus, blood, lung, liver and pancreas. Isoform 1 is expressed almost exclusively in the brain, in all brain regions. Not expressed in the spinal cord.

Its subcellular location is the endomembrane system. The protein localises to the synapse. It localises to the synaptosome. It is found in the cell projection. The protein resides in the lamellipodium. Its subcellular location is the cell membrane. The protein localises to the membrane. It localises to the clathrin-coated pit. It is found in the recycling endosome. The protein resides in the endosome. Its subcellular location is the cytoplasmic vesicle. The protein localises to the cytoplasm. It localises to the nucleus envelope. Adapter protein that provides a link between the endocytic membrane traffic and the actin assembly machinery. Acts as a guanine nucleotide exchange factor (GEF) for CDC42, and thereby stimulates actin nucleation mediated by WASL and the ARP2/3 complex. Plays a role in the assembly and maturation of clathrin-coated vesicles. Recruits FCHSD2 to clathrin-coated pits. Involved in endocytosis of activated EGFR, and probably also other growth factor receptors. Involved in endocytosis of integrin beta-1 (ITGB1) and transferrin receptor (TFR); internalization of ITGB1 as DAB2-dependent cargo but not TFR may involve association with DAB2. Promotes ubiquitination and subsequent degradation of EGFR, and thereby contributes to the down-regulation of EGFR-dependent signaling pathways. In chromaffin cells, required for normal exocytosis of catecholamines. Required for rapid replenishment of release-ready synaptic vesicles at presynaptic active zones. Inhibits ARHGAP31 activity toward RAC1. Its function is as follows. Plays a role in synaptic vesicle endocytosis in brain neurons. In Homo sapiens (Human), this protein is Intersectin-1.